The chain runs to 466 residues: 3-isopropylmalate dehydratase large subunit (466 aa).

[4Fe-4S] cluster is bound by residues cysteine 347, cysteine 407, and cysteine 410.

It belongs to the aconitase/IPM isomerase family. LeuC type 1 subfamily. In terms of assembly, heterodimer of LeuC and LeuD. The cofactor is [4Fe-4S] cluster.

It carries out the reaction (2R,3S)-3-isopropylmalate = (2S)-2-isopropylmalate. It functions in the pathway amino-acid biosynthesis; L-leucine biosynthesis; L-leucine from 3-methyl-2-oxobutanoate: step 2/4. Catalyzes the isomerization between 2-isopropylmalate and 3-isopropylmalate, via the formation of 2-isopropylmaleate. The sequence is that of 3-isopropylmalate dehydratase large subunit from Shigella flexneri.